The sequence spans 216 residues: Penicillin-binding protein activator LpoB (216 aa).

The N-terminal stretch at 1 to 20 is a signal peptide; sequence MIKNLSRYALVTAFALFLSG. Cys21 carries N-palmitoyl cysteine lipidation. Cys21 is lipidated: S-diacylglycerol cysteine. The disordered stretch occupies residues 28 to 77; that stretch reads QPAPVDEAKPGTEQPAQPTQPVPTVPSVPTVPAQPGPIEHPDQTSQPAPR.

Belongs to the LpoB family. Interacts with PBP1b.

It is found in the cell outer membrane. Functionally, regulator of peptidoglycan synthesis that is essential for the function of penicillin-binding protein 1B (PBP1b). This Enterobacter sp. (strain 638) protein is Penicillin-binding protein activator LpoB.